The chain runs to 598 residues: Nuclear receptor subfamily 4immunitygroup A member 1 (598 aa).

Disordered stretches follow at residues 1 to 44 (MPCI…EAAP), 131 to 158 (YYGS…DGSF), 177 to 206 (LPKA…AQSP), and 221 to 265 (GESY…GSEG). The segment covering 134–145 (SPCSAPSPSTPS) has biased composition (low complexity). The required for nuclear import stretch occupies residues 171 to 466 (RAWTEQLPKA…PGEGKLIFCS (296 aa)). Residues 264–339 (EGRCAVCGDN…VGMVKEVVRT (76 aa)) constitute a DNA-binding region (nuclear receptor). 2 consecutive NR C4-type zinc fingers follow at residues 267 to 287 (CAVC…CEGC) and 303 to 327 (CLAN…FQKC). The required for binding NBRE-containing DNA stretch occupies residues 268-354 (AVCGDNASCQ…RRGRLPSKPK (87 aa)). Residues 299–361 (AKYICLANKD…KPKQPPDASP (63 aa)) form a required for the interaction with RXRA region. Ser341 is subject to Phosphoserine; by PKA. Positions 341 to 361 (SLKGRRGRLPSKPKQPPDASP) are disordered. Residue Ser351 is modified to Phosphoserine. The NR LBD domain occupies 360–595 (SPANLLTSLV…PIIDKIFMDT (236 aa)). The tract at residues 521-544 (PRRVEELQNRIASCLKEHVAAVAG) is binds lipopolysaccharide. The tract at residues 584 to 595 (PPPIIDKIFMDT) is AF-2.

It belongs to the nuclear hormone receptor family. NR4 subfamily. As to quaternary structure, binds the NGFI-B response element (NBRE) as a monomer. Binds the Nur response element (NurRE), consisting of two inverse NBRE-related octanucleotide repeats separated by 6 base-pairs, as a dimer. Interacts (via N-terminus) with NLRP3 (via LRR repeat domain); the interaction is direct, requires binding of NR4A1/Nur77 to NBRE-containing dsDNA and lipopolysaccharide, and leads to non-canonical NLRP3 inflammasome activation. Interacts with GADD45GIP1. Interacts with STK11. Interacts with IFI27. Heterodimer (via DNA-binding domain) with RXRA (via C-terminus); DNA-binding of the heterodimer is enhanced by 9-cis retinoic acid. Competes for the RXRA interaction with EP300 and thereby attenuates EP300 mediated acetylation of RXRA. Interacts with NCOA1. Interacts with NCOA2. Interacts with NCOA3. Zn(2+) serves as cofactor. In terms of processing, phosphorylated at Ser-351 by RPS6KA1 and RPS6KA3 in response to mitogenic or stress stimuli. Post-translationally, acetylated by p300/CBP, acetylation increases stability. Deacetylated by HDAC1. As to expression, fetal muscle and adult liver, brain and thyroid.

The protein resides in the nucleus. It is found in the cytoplasm. Its subcellular location is the cytosol. It localises to the mitochondrion. With respect to regulation, its transcription factor activity is activated by binding cytosporone B (Csn-B) via its ligand-binding (NR LBD) domain and stimulates recruitment of coactivators NCOA1 and NCOA2, but not NCOA3, to promoters. Csn-B-binding is also accompanied by its translocation to the mitochondrion. Its transcription factor activity is activated by corticotropin-releasing hormone (CRH) and forskolin. Not activated by binding cytosporone C (Csn-C). Functionally, orphan nuclear receptor. Binds the NGFI-B response element (NBRE) 5'-AAAGGTCA-3'. Binds 9-cis-retinoic acid outside of its ligand-binding (NR LBD) domain. Participates in energy homeostasis by sequestrating the kinase STK11 in the nucleus, thereby attenuating cytoplasmic AMPK activation. Regulates the inflammatory response in macrophages by regulating metabolic adaptations during inflammation, including repressing the transcription of genes involved in the citric acid cycle (TCA). Inhibits NF-kappa-B signaling by binding to low-affinity NF-kappa-B binding sites, such as at the IL2 promoter. May act concomitantly with NR4A2 in regulating the expression of delayed-early genes during liver regeneration. Plays a role in the vascular response to injury. In the cytosol, upon its detection of both bacterial lipopolysaccharide (LPS) and NBRE-containing mitochondrial DNA released by GSDMD pores during pyroptosis, it promotes non-canonical NLRP3 inflammasome activation by stimulating association of NLRP3 and NEK7. The polypeptide is Nuclear receptor subfamily 4immunitygroup A member 1 (NR4A1) (Homo sapiens (Human)).